Consider the following 397-residue polypeptide: Putative F-box protein At2g04810 (397 aa).

The F-box domain occupies 20 to 68 (SDWSKLCPDVLRKIYETLRSPVDSHRAKIVCSNWYSVWKTCVKRPLCPL).

The protein is Putative F-box protein At2g04810 of Arabidopsis thaliana (Mouse-ear cress).